The sequence spans 353 residues: uncharacterized protein (353 aa).

Residues 1–30 form the signal peptide; it reads MHLRHLFSPRLRGSLLLGSLLVASSFSTLA.

This is an uncharacterized protein from Salmonella typhi.